The chain runs to 838 residues: Protein translocase subunit SecA (838 aa).

ATP is bound by residues Q87, 105–109 (GEGKT), and D494. 2 stretches are compositionally biased toward basic and acidic residues: residues 781–790 (EQEFQHKDET) and 803–819 (EDAK…KVGR). The tract at residues 781–838 (EQEFQHKDETANVQYSGPAESAEDAKKEPKRREAPKVGRNDPCPCGSGKKYKKCHGAK) is disordered. Zn(2+)-binding residues include C823, C825, C834, and H835. Basic residues predominate over residues 829–838 (KKYKKCHGAK).

Belongs to the SecA family. In terms of assembly, monomer and homodimer. Part of the essential Sec protein translocation apparatus which comprises SecA, SecYEG and auxiliary proteins SecDF-YajC and YidC. Requires Zn(2+) as cofactor.

It localises to the cell inner membrane. The protein localises to the cytoplasm. It catalyses the reaction ATP + H2O + cellular proteinSide 1 = ADP + phosphate + cellular proteinSide 2.. Functionally, part of the Sec protein translocase complex. Interacts with the SecYEG preprotein conducting channel. Has a central role in coupling the hydrolysis of ATP to the transfer of proteins into and across the cell membrane, serving as an ATP-driven molecular motor driving the stepwise translocation of polypeptide chains across the membrane. The protein is Protein translocase subunit SecA of Solidesulfovibrio magneticus (strain ATCC 700980 / DSM 13731 / RS-1) (Desulfovibrio magneticus).